The sequence spans 342 residues: MSAFTPASEVLLRHSDDFEQSRILFAGDMQDDLPGRFECAASRAHTQQYHHWQLLSRQMEDRVRFSLVAEQSDVADCDTLIYYWPKNKPEAQFQLMNLLSMMPVGCDIFVVGENRSGVRSAESMLAEYATLNKIDSARRCGLYHGRLDKQPTFDAEKYWGEYQLDGLTIKTLPGVFSRDGLDVGSQLLLSTFTPHTKGKVLDVGCGAGVLSAVLASHSPKVRLTLSDVSAPAVEASRATLAANGLEGDVFASNVFSEVTGRFDIIISNPPFHDGMETSLEAAQTLIRGAVRHLGSGGELRIVANAFLPYPKLLDEIFGFHEVLAQTGRFKVYRTVMTRQAKK.

It belongs to the methyltransferase superfamily. RsmC family. As to quaternary structure, monomer.

The protein localises to the cytoplasm. It carries out the reaction guanosine(1207) in 16S rRNA + S-adenosyl-L-methionine = N(2)-methylguanosine(1207) in 16S rRNA + S-adenosyl-L-homocysteine + H(+). Functionally, specifically methylates the guanine in position 1207 of 16S rRNA in the 30S particle. The protein is Ribosomal RNA small subunit methyltransferase C of Enterobacter sp. (strain 638).